A 149-amino-acid chain; its full sequence is Large ribosomal subunit protein bL9 (149 aa).

This sequence belongs to the bacterial ribosomal protein bL9 family.

Its function is as follows. Binds to the 23S rRNA. This chain is Large ribosomal subunit protein bL9, found in Persephonella marina (strain DSM 14350 / EX-H1).